Consider the following 446-residue polypeptide: Exodeoxyribonuclease 7 large subunit (446 aa).

This sequence belongs to the XseA family. In terms of assembly, heterooligomer composed of large and small subunits.

The protein resides in the cytoplasm. The catalysed reaction is Exonucleolytic cleavage in either 5'- to 3'- or 3'- to 5'-direction to yield nucleoside 5'-phosphates.. In terms of biological role, bidirectionally degrades single-stranded DNA into large acid-insoluble oligonucleotides, which are then degraded further into small acid-soluble oligonucleotides. The protein is Exodeoxyribonuclease 7 large subunit of Streptococcus pneumoniae (strain ATCC 700669 / Spain 23F-1).